The following is a 564-amino-acid chain: Agglutinin (564 aa).

The N-terminal stretch at 1–24 is a signal peptide; it reads MYAVATWLCFGSTSGWSFTLEDNN. Beta-D-galactose is bound at residue 32 to 34; the sequence is IIN. Asn34 carries N-linked (GlcNAc...) asparagine glycosylation. Residues Tyr104, Tyr147, Glu200, and Arg203 contribute to the active site. Residues 104-105 and 145-147 contribute to the AMP site; these read YV and GNY. N-linked (GlcNAc...) asparagine glycosylation occurs at Asn259. Cys282 and Cys306 are disulfide-bonded. The propeptide at 291 to 302 is linker peptide; the sequence is SLLIRPVVPNFN. Positions 309 to 436 constitute a Ricin B-type lectin 1 domain; it reads PEPIVRIVGR…YAVSQGWLPT (128 aa). Beta-D-galactose is bound by residues Ile312, 324-328, Gln337, Lys342, and Asn348; that span reads DVTGE. The stretch at 319–361 is one 1-alpha repeat; sequence NGLCVDVTGEEFFDGNPIQLWPCKSNTDWNQLWTLRKDSTIRS. A disulfide bridge connects residues Cys322 and Cys341. A 1-beta repeat occupies 362–402; the sequence is NGKCLTISKSSPRQQVVIYNCSTATVGATRWQIWDNRTIIN. The cysteines at positions 365 and 382 are disulfide-linked. Asn397 and Asn437 each carry an N-linked (GlcNAc...) asparagine glycan. Residues 405-437 form a 1-gamma repeat; it reads SGLVLAATSGNSGTKLTVQTNIYAVSQGWLPTN. Asn437 provides a ligand contact to beta-D-galactose. In terms of domain architecture, Ricin B-type lectin 2 spans 439–563; the sequence is TQPFVTTIVG…GNLNQIWLPL (125 aa). A 2-alpha repeat occupies 450–485; the sequence is YGMCLQANSGKVWLEDCTSEKAEQQWALYADGSIRP. 2 disulfide bridges follow: Cys453–Cys466 and Cys492–Cys509. Residues 489 to 528 form a 2-beta repeat; sequence RDNCLTTDANIKGTVVKILSCGPASSGQRWMFKNDGTILN. The 2-gamma repeat unit spans residues 531 to 558; that stretch reads NGLVLDVRRSDPSLKQIIVHPFHGNLNQ.

The protein in the N-terminal section; belongs to the ribosome-inactivating protein family. Type 2 RIP subfamily.

The enzyme catalyses Endohydrolysis of the N-glycosidic bond at one specific adenosine on the 28S rRNA.. The sequence is that of Agglutinin from Ricinus communis (Castor bean).